An 87-amino-acid polypeptide reads, in one-letter code: U3-theraphotoxin-Hhn1c (87 aa).

A signal peptide spans 1 to 24 (MVNMKASMFLTFAGLVLLFVVCHA). Residues 25–52 (SESEEKEFPKEMLSSIFAVDDDFKQEER) constitute a propeptide that is removed on maturation. 3 disulfides stabilise this stretch: Cys-54–Cys-67, Cys-61–Cys-72, and Cys-66–Cys-79.

Belongs to the neurotoxin 10 (Hwtx-1) family. 51 (Hntx-8) subfamily. Hntx-8 sub-subfamily. Expressed by the venom gland.

The protein localises to the secreted. Its function is as follows. Ion channel inhibitor. This Cyriopagopus hainanus (Chinese bird spider) protein is U3-theraphotoxin-Hhn1c.